A 691-amino-acid chain; its full sequence is Beta-galactosidase III (691 aa).

Substrate contacts are provided by Arg-121 and Asn-159. Glu-160 functions as the Proton donor in the catalytic mechanism. Residue Glu-318 is the Nucleophile of the active site. Substrate is bound by residues Trp-326 and 366–369 (EKWH).

The protein belongs to the glycosyl hydrolase 42 family.

The enzyme catalyses Hydrolysis of terminal non-reducing beta-D-galactose residues in beta-D-galactosides.. In terms of biological role, specific for beta-D-anomer-linked galactoside substrates. Hydrolyzes o-nitrophenyl-beta-D-galactopyranoside (ONPG), chromogen 5-bromo-4-chloro-3-indolyl-beta-D-galactopyranoside (X-gal) and to a lesser extent lactose. Hydrolyzes p-nitrophenyl-beta-D-galacturonide very slightly. Does not hydrolyze maltose, sucrose, raffinose or melibiose. Has some transgalactosylation activity yielding galacto-oligosaccharides (GaOS), including O-beta-D-galactopyranosyl-(1,3)-O-beta-D-galactopyranosyl-(1-4)-D-glucopyranose. This chain is Beta-galactosidase III, found in Bifidobacterium longum subsp. infantis.